The sequence spans 424 residues: MSDDQPGPRTEYKLETDSELRFEMENGNDKVTVTLLNGHAELYGTELVMKKPYEFGVGAKVAIFTYHGCTIELRGKPDVAYVARETPMVQYLNCNSALEHLRTKAEEDDVRGPVAMVVGPMDVGKSTLCRIFLNYAVRLGRRPIYVDLDVGQGGIAIPGTIGALLVERPAPVAEGFSQQAPLVYHFGHTNPSENDVFYDALITKLAETTLERLQANKRAKHSGMIINTCGWVKQGGYHHILHAAKEFEVNAIFVLDQERLYNELLRDVASKTVQVVYLPKSGGVVKRTRSQRAEARDNRIREYFYGSKMPLYPHSFDVKFSDVKIFKVGSPALPDSCLPLGMKKEDNFTKLVAVQPSMQLLHHILAVSFAESIEENVIQSNVAGFICVTDVNMEKEVLTILSPQPRPLPQTILLVSDLQFMDSH.

ATP contacts are provided by residues Glu19, Lys60, and 122–127; that span reads DVGKST.

Belongs to the Clp1 family. Clp1 subfamily.

Its subcellular location is the nucleus. Required for endonucleolytic cleavage during polyadenylation-dependent pre-mRNA 3'-end formation. In Aedes aegypti (Yellowfever mosquito), this protein is Protein CLP1 homolog (cbc).